The primary structure comprises 1759 residues: Protein TIC 214 (1759 aa).

5 helical membrane passes run 23–45 (VVVG…LFLL), 64–84 (FITG…HLAL), 129–149 (IFFQ…SSIF), 172–192 (IGWI…LICI), and 221–241 (IFVV…PPPF).

It belongs to the TIC214 family. In terms of assembly, part of the Tic complex.

Its subcellular location is the plastid. The protein localises to the chloroplast inner membrane. Functionally, involved in protein precursor import into chloroplasts. May be part of an intermediate translocation complex acting as a protein-conducting channel at the inner envelope. The sequence is that of Protein TIC 214 from Phaseolus vulgaris (Kidney bean).